We begin with the raw amino-acid sequence, 116 residues long: M-zodatoxin-Lt6a/c (116 aa).

A signal peptide spans 1-22 (MKYFVVALTLAVAFVCIEECKT). 2 consecutive propeptides follow at residues 23–44 (VEIG…DEAR) and 80–83 (EEAR). Short sequence motifs (processing quadruplet motif) lie at residues 41-44 (DEAR) and 80-83 (EEAR). Gln-84 bears the Pyrrolidone carboxylic acid mark.

It belongs to the cationic peptide 03 (latarcin) family. 06 subfamily. In terms of processing, cleavage of the propeptide depends on the processing quadruplet motif (XXXR, with at least one of X being E). In terms of tissue distribution, expressed by the venom gland.

The protein localises to the secreted. Its function is as follows. Does not have antimicrobial activity against Gram-positive bacteria (A.globiformis VKM Ac-1112 (MIC&gt;70 uM) and B.subtilis VKM B-501 (MIC&gt;70 uM)), Gram-negative bacteria (E.coli DH5-alpha (MIC&gt;70 uM), E.coli MH1 (MIC&gt;70 uM) and P.aeruginosa PAO1 (MIC&gt;70 uM)), yeast (P.pastoris GS115 (MIC&gt;70 uM) or S.cerevisiae Y190 (MIC&gt;70 uM)). Does not have hemolytic activity against rabbit erythrocytes. However, it causes some conductance changes in planar bilayer membranes, without membrane rupture, suggesting a cytolytic function on other biological targets. It causes paralysis, but is not lethal when injected into insect larvae. This chain is M-zodatoxin-Lt6a/c, found in Lachesana tarabaevi (Spider).